Reading from the N-terminus, the 101-residue chain is Small ribosomal subunit protein bS6 (101 aa).

It belongs to the bacterial ribosomal protein bS6 family. Part of the 30S ribosomal subunit. Forms a tight heterodimer with protein bS18.

In terms of biological role, located on the outer edge of the platform on the body of the 30S subunit. This Thermus thermophilus (strain ATCC BAA-163 / DSM 7039 / HB27) protein is Small ribosomal subunit protein bS6 (rpsF).